We begin with the raw amino-acid sequence, 68 residues long: Large ribosomal subunit protein bL35 (68 aa).

It belongs to the bacterial ribosomal protein bL35 family.

This chain is Large ribosomal subunit protein bL35, found in Orientia tsutsugamushi (strain Ikeda) (Rickettsia tsutsugamushi).